A 796-amino-acid polypeptide reads, in one-letter code: MPTTQQSPQDEQEKLLDEAIQAVKVQSFQMKRCLDKNKLMDALKHASNMLGELRTSMLSPKSYYELYMAISDELHYLEVYLTDEFAKGRKVADLYELVQYAGNIIPRLYLLITVGVVYVKSFPQSRKDILKDLVEMCRGVQHPLRGLFLRNYLLQCTRNILPDEGEPTDEETTGDISDSMDFVLLNFAEMNKLWVRMQHQGHSRDREKRERERQELRILVGTNLVRLSQLEGVNVERYKQIVLTGILEQVVNCRDALAQEYLMECIIQVFPDEFHLQTLNPFLRACAELHQNVNVKNIIIALIDRLALFAHREDGPGIPADIKLFDIFSQQVATVIQSRQDMPSEDVVSLQVSLINLAMKCYPDRVDYVDKVLETTVEIFNKLNLEHIATSSAVSKELTRLLKIPVDTYNNILTVLKLKHFHPLFEYFDYESRKSMSCYVLSNVLDYNTEIVSQDQVDSIMNLVSTLIQDQPDQPVEDPDPEDFADEQSLVGRFIHLLRSEDPDQQYLILNTARKHFGAGGNQRIRFTLPPLVFAAYQLAFRYKENSKVDDKWEKKCQKIFSFAHQTISALIKAELAELPLRLFLQGALAAGEIGFENHETVAYEFMSQAFSLYEDEISDSKAQLAAITLIIGTFERMKCFSEENHEPLRTQCALAASKLLKKPDQGRAVSTCAHLFWSGRNTDKNGEELHGGKRVMECLKKALKIANQCMDPSLQVQLFIEILNRYIYFYEKENDAVTIQVLNQLIQKIREDLPNLESSEETEQINKHFHNTLEHLRLRRESPESEGPIYEGLIL.

Ser-7 bears the Phosphoserine mark. Interaction with SNX3 regions lie at residues 25-44 and 205-215; these read VQSF…DALK and DREKRERERQE. The interaction with SLC11A2 stretch occupies residues 438 to 796; sequence CYVLSNVLDY…EGPIYEGLIL (359 aa). The tract at residues 500–693 is interaction with IGF2R cytoplasmic domain; it reads SEDPDQQYLI…DKNGEELHGG (194 aa). Residue Ser-783 is modified to Phosphoserine. Tyr-791 is subject to Phosphotyrosine.

Belongs to the VPS35 family. In terms of assembly, component of the heterotrimeric retromer cargo-selective complex (CSC), also decribed as vacuolar protein sorting subcomplex (VPS), formed by VPS26 (VPS26A or VPS26B), VPS29 and VPS35. The CSC has a highly elongated structure with VPS26 and VPS29 binding independently at opposite distal ends of VPS35 as central platform. The CSC is believed to associate with variable sorting nexins to form functionally distinct retromer complex variants. The originally described retromer complex (also called SNX-BAR retromer) is a pentamer containing the CSC and a heterodimeric membrane-deforming subcomplex formed between SNX1 or SNX2 and SNX5 or SNX6 (also called SNX-BAR subcomplex); the respective CSC and SNX-BAR subcomplexes associate with low affinity. The CSC associates with SNX3 to form a SNX3-retromer complex. The CSC associates with SNX27, the WASH complex and the SNX-BAR subcomplex to form the SNX27-retromer complex. Interacts with VPS26A, VPS26B, VPS29, SNX1, SNX2, IGF2R, SNX3, GOLPH3, LRRK2, SLC11A2, WASHC2A, WASHC2C, FKBP15, WASHC1, RAB7A, SNX27, WASHC5, EHD1. Interacts with MAGEL2; leading to recruitment of the TRIM27:MAGEL2 E3 ubiquitin ligase complex retromer-containing endosomes. Interacts with SORCS2. (Microbial infection) Interacts with human papillomavirus 16 minor capsid protein L2 (via C-terminus); this interaction mediates the transport of the capsid from the early endosome to the Golgi apparatus. Ubiquitous. Highly expressed in heart, brain, placenta, skeletal muscle, spleen, thymus, testis, ovary, small intestine, kidney and colon.

Its subcellular location is the cytoplasm. It localises to the membrane. The protein resides in the endosome. The protein localises to the early endosome. It is found in the late endosome. Acts as a component of the retromer cargo-selective complex (CSC). The CSC is believed to be the core functional component of retromer or respective retromer complex variants acting to prevent missorting of selected transmembrane cargo proteins into the lysosomal degradation pathway. The recruitment of the CSC to the endosomal membrane involves RAB7A and SNX3. The CSC seems to associate with the cytoplasmic domain of cargo proteins predominantly via VPS35; however, these interactions seem to be of low affinity and retromer SNX proteins may also contribute to cargo selectivity thus questioning the classical function of the CSC. The SNX-BAR retromer mediates retrograde transport of cargo proteins from endosomes to the trans-Golgi network (TGN) and is involved in endosome-to-plasma membrane transport for cargo protein recycling. The SNX3-retromer mediates the retrograde endosome-to-TGN transport of WLS distinct from the SNX-BAR retromer pathway. The SNX27-retromer is believed to be involved in endosome-to-plasma membrane trafficking and recycling of a broad spectrum of cargo proteins. The CSC seems to act as recruitment hub for other proteins, such as the WASH complex and TBC1D5. Required for retrograde transport of lysosomal enzyme receptor IGF2R and SLC11A2. Required to regulate transcytosis of the polymeric immunoglobulin receptor (pIgR-pIgA). Required for endosomal localization of WASHC2C. Mediates the association of the CSC with the WASH complex via WASHC2. Required for the endosomal localization of TBC1D5. Functionally, (Microbial infection) The heterotrimeric retromer cargo-selective complex (CSC) mediates the exit of human papillomavirus from the early endosome and the delivery to the Golgi apparatus. This Homo sapiens (Human) protein is Vacuolar protein sorting-associated protein 35.